The sequence spans 468 residues: Spliceosome-associated protein CWC27 homolog (468 aa).

The residue at position 2 (Ser2) is an N-acetylserine. In terms of domain architecture, PPIase cyclophilin-type spans 11–166 (TNGKVLLKTT…NPHRIKSCEV (156 aa)). 2 disordered regions span residues 204–382 (LLSF…EDQT) and 427–468 (RKVK…KERR). The stretch at 206-229 (SFGEEAEEEEEEVNRVSQSMKGRS) forms a coiled coil. Positions 231-241 (SSHDLLKDDPH) are enriched in basic and acidic residues. Residues 256-268 (TGDLEDDAEDDSV) are compositionally biased toward acidic residues. Basic and acidic residues-rich tracts occupy residues 269 to 287 (EHDGSMEEDEKNLMRERIA) and 302 to 342 (GDGE…AEKG). Ser273 bears the Phosphoserine mark. Positions 309 to 342 (ASRSEELRKEARQLKRELLAAKQKKESATKAEKG) form a coiled coil. A Phosphoserine modification is found at Ser343. 2 stretches are compositionally biased toward basic and acidic residues: residues 356–368 (EYRREKQKYEALR) and 453–468 (RREESKKLLREKKERR).

The protein belongs to the cyclophilin-type PPIase family. As to quaternary structure, part of the activated spliceosome B/catalytic step 1 spliceosome, one of the forms of the spliceosome which has a well-formed active site but still cannot catalyze the branching reaction and is composed at least of 52 proteins, the U2, U5 and U6 snRNAs and the pre-mRNA. Recruited during early steps of activated spliceosome B maturation, it is probably one of the first proteins released from this complex as he matures to the spliceosome C complex. Component of the minor spliceosome, which splices U12-type introns.

It localises to the nucleus. Functionally, as part of the spliceosome, plays a role in pre-mRNA splicing. Probable inactive PPIase with no peptidyl-prolyl cis-trans isomerase activity. As a component of the minor spliceosome, involved in the splicing of U12-type introns in pre-mRNAs. The protein is Spliceosome-associated protein CWC27 homolog of Rattus norvegicus (Rat).